A 200-amino-acid polypeptide reads, in one-letter code: Recombination protein RecR (200 aa).

The C4-type zinc-finger motif lies at cysteine 57 to cysteine 72. Residues glycine 81–proline 176 enclose the Toprim domain.

The protein belongs to the RecR family.

Functionally, may play a role in DNA repair. It seems to be involved in an RecBC-independent recombinational process of DNA repair. It may act with RecF and RecO. This is Recombination protein RecR from Actinobacillus succinogenes (strain ATCC 55618 / DSM 22257 / CCUG 43843 / 130Z).